The primary structure comprises 442 residues: GTPase Obg (442 aa).

In terms of domain architecture, Obg spans 1–158; the sequence is MFYDQARIFV…HWLELELKLL (158 aa). Positions 159–329 constitute an OBG-type G domain; that stretch reads ADVGLVGFPN…LIYHVHKGLE (171 aa). GTP is bound by residues 165–172, 190–194, 212–215, 282–285, and 310–312; these read GFPNVGKS, FTTLE, DIPG, NKMD, and SAA. The Mg(2+) site is built by Ser172 and Thr192. The OCT domain maps to 349–427; sequence FTGKTEERFK…IGDLDFDFIE (79 aa).

This sequence belongs to the TRAFAC class OBG-HflX-like GTPase superfamily. OBG GTPase family. As to quaternary structure, monomer. Mg(2+) serves as cofactor.

The protein localises to the cytoplasm. Functionally, an essential GTPase which binds GTP, GDP and possibly (p)ppGpp with moderate affinity, with high nucleotide exchange rates and a fairly low GTP hydrolysis rate. Plays a role in control of the cell cycle, stress response, ribosome biogenesis and in those bacteria that undergo differentiation, in morphogenesis control. The polypeptide is GTPase Obg (Heliobacterium modesticaldum (strain ATCC 51547 / Ice1)).